Reading from the N-terminus, the 257-residue chain is Triosephosphate isomerase (257 aa).

2 residues coordinate substrate: Asn-11 and Lys-13. His-96 acts as the Electrophile in catalysis. Glu-170 functions as the Proton acceptor in the catalytic mechanism.

Belongs to the triosephosphate isomerase family. In terms of assembly, homodimer.

It catalyses the reaction D-glyceraldehyde 3-phosphate = dihydroxyacetone phosphate. Its pathway is carbohydrate biosynthesis; gluconeogenesis. It functions in the pathway carbohydrate degradation; glycolysis; D-glyceraldehyde 3-phosphate from glycerone phosphate: step 1/1. The polypeptide is Triosephosphate isomerase (Giardia intestinalis (Giardia lamblia)).